Here is a 314-residue protein sequence, read N- to C-terminus: Malate dehydrogenase (314 aa).

Residues 11–16 and aspartate 35 each bind NAD(+); that span reads GSGNIG. Positions 84 and 90 each coordinate substrate. Residues asparagine 97 and 120 to 122 contribute to the NAD(+) site; that span reads ITN. Substrate-binding residues include asparagine 122 and arginine 153. The active-site Proton acceptor is the histidine 177.

The protein belongs to the LDH/MDH superfamily. MDH type 3 family.

It carries out the reaction (S)-malate + NAD(+) = oxaloacetate + NADH + H(+). Functionally, catalyzes the reversible oxidation of malate to oxaloacetate. The polypeptide is Malate dehydrogenase (Rickettsia africae (strain ESF-5)).